The sequence spans 72 residues: Aurein-2.3 (72 aa).

Positions 1-22 are cleaved as a signal peptide; sequence MAFLKKSLFLVLFLGLVSLSIC. Positions 23-49 are excised as a propeptide; that stretch reads EKEKRQNGEDEDENEAANHEEGSEEKR. The tract at residues 27-47 is disordered; the sequence is RQNGEDEDENEAANHEEGSEE. Residues 38–47 show a composition bias toward basic and acidic residues; it reads AANHEEGSEE. Leu65 carries the post-translational modification Leucine amide. Residues 69–72 constitute a propeptide that is removed on maturation; that stretch reads NDVE.

In terms of processing, amidation is essential for antibacterial activity against Gram-positive bacteria. As to expression, expressed by the skin dorsal glands.

The protein resides in the secreted. The protein localises to the target cell membrane. Amphipathic alpha-helical antimicrobial peptide with weak to moderate activity against Gram-positive bacteria, and no activity against Gram-negative bacteria. Probably acts by disturbing membrane functions with its amphipathic structure. Strongly inhibits the formation of NO by neuronal nitric oxide synthase (nNOS) at micromolar concentrations. Acts by a non-competitive mechanism, probably by binding to calcium/calmodulin and as a consequence blocking calmodulin attachment to nNOS. The polypeptide is Aurein-2.3 (Ranoidea aurea (Green and golden bell frog)).